A 142-amino-acid polypeptide reads, in one-letter code: MEPTKIVENLYLGNIQNGIRHSNYGFDKIINLTRFNNQYGIPTVWINIDDSESSDLYSHLQKVTTLIHDSIENGNKVLVHCQAGISRSATVVIAYIMRSKRYSLQDAFNFVKKKRSIIFPNAGFIKQLAQFERWLNSTNSYF.

The Tyrosine-protein phosphatase domain occupies Glu-2–Ser-137. The Phosphocysteine intermediate role is filled by Cys-81.

This sequence belongs to the protein-tyrosine phosphatase family.

The chain is Putative tyrosine phosphatase 123R from Invertebrate iridescent virus 6 (IIV-6).